The following is a 178-amino-acid chain: MLEGVIRESITKANAKALKKDGYLIANVYGKGIENVNGAFKLNPFIKYLKEKKHLIFPVKLGDKTFEVVVQEYQKNPVTNELIHVDLLAVTKGVKSKFKVPVKHQGTPVGLKNKGILMLSKKRISVECAPEHLPDHYLVDVAPLDVNESILVRDLEKHENVKILDHDSIAVIGVIKAK.

The protein belongs to the bacterial ribosomal protein bL25 family. CTC subfamily. As to quaternary structure, part of the 50S ribosomal subunit; part of the 5S rRNA/L5/L18/L25 subcomplex. Contacts the 5S rRNA. Binds to the 5S rRNA independently of L5 and L18.

Functionally, this is one of the proteins that binds to the 5S RNA in the ribosome where it forms part of the central protuberance. This chain is Large ribosomal subunit protein bL25, found in Helicobacter pylori (strain HPAG1).